A 1530-amino-acid chain; its full sequence is Coiled-coil domain-containing protein 141 (1530 aa).

A Phosphothreonine modification is found at Thr91. Coiled-coil stretches lie at residues 642 to 706 (VKNE…EALM), 758 to 783 (VKEK…QDYE), and 861 to 970 (SNVS…KTSD). The segment at 1210 to 1241 (SPDDISLPPLPGSPESPLAPSDMEVEEPVSSS) is disordered. The Ig-like domain occupies 1409 to 1530 (PNFSRLLSNV…VSLMYWLLTQ (122 aa)).

Interacts with DISC1. Interacts preferentially with phosphorylated forms of myosin regulatory light chain (MRLC). Interacts (via the N-terminal region) with HDAC6; inhibits the deacetylase activity of HDAC6. Interacts with KIBRA (via the C-terminal region); retains AMPAR in the cytosol after internalization. Ubiquitinated and degradated by the CDC20-APC/C pathway. During brain development, CDC20-APC/C complex degrades CCDC141 after centrosome translocation into the dilated area. CCDC141 is restabilized in the dilation until the centrosome enters the dilation, at which point it is once again immediately destabilized by CDC20-APC/C complex. The oscillatory regulation of CCDC141 protein is needed for proper cortical migration. In terms of processing, phosphorylation at Thr-91 by PLK1 affects CCDC141 degradation.

The protein localises to the cytoplasm. It localises to the cytoskeleton. It is found in the microtubule organizing center. The protein resides in the centrosome. Its function is as follows. Plays a critical role in cortical radial and GnRH neurons migration during brain development. Regulates cortical radial migration by negatively controlling the activity of histone deacetylase 6 (HDAC6) and promotes centrosome maturation. CAMDI is required for dilation formation of cortical neurons during radial migration. Plays a critical role in learning and memory performance through regulation of AMPA-selective glutamate receptors (AMPARs) cell surface expression in competition with KIBRA. In Homo sapiens (Human), this protein is Coiled-coil domain-containing protein 141 (CCDC141).